We begin with the raw amino-acid sequence, 298 residues long: Acetylglutamate kinase (298 aa).

Substrate contacts are provided by residues 69 to 70 (GG), Arg-91, and Asn-191.

The protein belongs to the acetylglutamate kinase family. ArgB subfamily.

It localises to the cytoplasm. The catalysed reaction is N-acetyl-L-glutamate + ATP = N-acetyl-L-glutamyl 5-phosphate + ADP. It functions in the pathway amino-acid biosynthesis; L-arginine biosynthesis; N(2)-acetyl-L-ornithine from L-glutamate: step 2/4. Its function is as follows. Catalyzes the ATP-dependent phosphorylation of N-acetyl-L-glutamate. The polypeptide is Acetylglutamate kinase (Neisseria meningitidis serogroup A / serotype 4A (strain DSM 15465 / Z2491)).